The following is a 1382-amino-acid chain: Hepatocyte growth factor receptor (1382 aa).

The first 24 residues, 1 to 24, serve as a signal peptide directing secretion; that stretch reads MKAPAVLAPGILVLLFTLVPRSHG. The Extracellular segment spans residues 25–933; that stretch reads ECKEALVKSE…VIVQPDQNFM (909 aa). The Sema domain occupies 27–516; it reads KEALVKSEMN…TGNKITKIPL (490 aa). N-linked (GlcNAc...) asparagine glycosylation occurs at N45. Cystine bridges form between C95–C101, C98–C160, C133–C141, and C173–C176. N-linked (GlcNAc...) asparagine glycosylation is present at N106. N-linked (GlcNAc...) asparagine glycans are attached at residues N203 and N359. Cystine bridges form between C299-C364 and C386-C398. 2 N-linked (GlcNAc...) asparagine glycosylation sites follow: N400 and N406. Disulfide bonds link C521/C539, C527/C562, C530/C546, and C542/C552. IPT/TIG domains follow at residues 564 to 656, 658 to 740, and 743 to 837; these read PAIY…FSYV, PVIT…FSYR, and PIVD…LTYV. T583 carries O-linked (Man) threonine glycosylation. N-linked (GlcNAc...) asparagine glycosylation is found at N608, N614, and N636. Residues T677 and T762 are each glycosylated (O-linked (Man) threonine). Residues N786 and N880 are each glycosylated (N-linked (GlcNAc...) asparagine). Residues 934–956 form a helical membrane-spanning segment; it reads GLIVGGVSISIILLLLLGLFLWL. At 957–1382 the chain is on the cytoplasmic side; the sequence is KKKKRIKDLG…QDNVDGTVDT (426 aa). Phosphoserine is present on S967. Position 978 is a phosphothreonine (T978). Phosphoserine occurs at positions 991, 998, and 1001. Y1004 carries the phosphotyrosine modification. In terms of domain architecture, Protein kinase spans 1079 to 1346; sequence VHFSEVIGRG…RISTIFSTFI (268 aa). Residues 1085–1093 and K1111 each bind ATP; that span reads IGRGHFGCV. The active-site Proton acceptor is D1205. Positions 1213–1382 are interaction with RANBP9; it reads LDEKFTVKVA…QDNVDGTVDT (170 aa). At Y1231 the chain carries Phosphotyrosine. Y1235 and Y1236 each carry phosphotyrosine; by autocatalysis. A Phosphothreonine modification is found at T1290. The interaction with MUC20 stretch occupies residues 1321–1360; the sequence is WHPKAEMRPSFSELVSRISTIFSTFIGEHYVHVNATYVNV. Phosphotyrosine; by autocatalysis is present on residues Y1350 and Y1357. Phosphotyrosine is present on Y1366.

Belongs to the protein kinase superfamily. Tyr protein kinase family. In terms of assembly, heterodimer made of an alpha chain (50 kDa) and a beta chain (145 kDa) which are disulfide linked. Binds PLXNB1. Interacts when phosphorylated with downstream effectors including STAT3, PIK3R1, SRC, PCLG1, GRB2 and GAB1. Interacts with SPSB1, SPSB2 and SPSB4. Interacts with INPP5D/SHIP1. When phosphorylated at Tyr-1357, interacts with INPPL1/SHIP2. Interacts with RANBP9 and RANBP10, as well as SPSB1, SPSB2, SPSB3 and SPSB4. SPSB1 binding occurs in the presence and in the absence of HGF, however HGF treatment has a positive effect on this interaction. Interacts with MUC20; prevents interaction with GRB2 and suppresses hepatocyte growth factor-induced cell proliferation. Interacts with GRB10. Interacts with PTPN1 and PTPN2. Interacts with HSP90AA1 and HSP90AB1; the interaction suppresses MET kinase activity. Interacts with tensin TNS3. Interacts (when phosphorylated) with tensin TNS4 (via SH2 domain); the interaction increases MET protein stability by inhibiting MET endocytosis and subsequent lysosomal degradation. Autophosphorylated in response to ligand binding on Tyr-1235 and Tyr-1236 in the kinase domain leading to further phosphorylation of Tyr-1350 and Tyr-1357 in the C-terminal multifunctional docking site. Dephosphorylated by PTPRJ at Tyr-1350 and Tyr-1366. Dephosphorylated by PTPN1 and PTPN2. Post-translationally, ubiquitinated. Ubiquitination by CBL regulates the receptor stability and activity through proteasomal degradation. In terms of processing, O-mannosylation of IPT/TIG domains by TMEM260 is required for protein maturation. O-mannosylated residues are composed of single mannose glycans that are not elongated or modified.

The protein localises to the membrane. It carries out the reaction L-tyrosyl-[protein] + ATP = O-phospho-L-tyrosyl-[protein] + ADP + H(+). In its inactive state, the C-terminal tail interacts with the catalytic domain and inhibits the kinase activity. Upon ligand binding, the C-terminal tail is displaced and becomes phosphorylated, thus increasing the kinase activity. In terms of biological role, receptor tyrosine kinase that transduces signals from the extracellular matrix into the cytoplasm by binding to hepatocyte growth factor/HGF ligand. Regulates many physiological processes including proliferation, scattering, morphogenesis and survival. Ligand binding at the cell surface induces autophosphorylation of MET on its intracellular domain that provides docking sites for downstream signaling molecules. Following activation by ligand, interacts with the PI3-kinase subunit PIK3R1, PLCG1, SRC, GRB2, STAT3 or the adapter GAB1. Recruitment of these downstream effectors by MET leads to the activation of several signaling cascades including the RAS-ERK, PI3 kinase-AKT, or PLCgamma-PKC. The RAS-ERK activation is associated with the morphogenetic effects while PI3K/AKT coordinates prosurvival effects. During embryonic development, MET signaling plays a role in gastrulation, development and migration of muscles and neuronal precursors, angiogenesis and kidney formation. In adults, participates in wound healing as well as organ regeneration and tissue remodeling. Also promotes differentiation and proliferation of hematopoietic cells. The chain is Hepatocyte growth factor receptor (MET) from Oryctolagus cuniculus (Rabbit).